The chain runs to 75 residues: Small integral membrane protein 7 (75 aa).

A signal peptide spans 1-17 (MIGDILLFGTLLMNAGA). Residues 18-53 (VLNFKLKKKDTQGFGEESKEPSTGDNIREFLLSLRY) are Extracellular-facing. The chain crosses the membrane as a helical span at residues 54-74 (FRIFIALWNVFMMLCMIVLFG). Ser-75 is a topological domain (cytoplasmic).

The protein belongs to the SMIM7 family.

It localises to the membrane. This chain is Small integral membrane protein 7 (Smim7), found in Mus musculus (Mouse).